Consider the following 65-residue polypeptide: Large ribosomal subunit protein uL29 (65 aa).

It belongs to the universal ribosomal protein uL29 family.

This is Large ribosomal subunit protein uL29 from Acidithiobacillus ferrooxidans (strain ATCC 23270 / DSM 14882 / CIP 104768 / NCIMB 8455) (Ferrobacillus ferrooxidans (strain ATCC 23270)).